The sequence spans 96 residues: MPAIEVGRICVKVKGREAGSKCVIVDIIDDNFVLVTGPKDISGVKRRRVNILHLEPTDKKIDIQKGASDEEVRKKIEEAGLTDYMKERIKIKIPTL.

It belongs to the eukaryotic ribosomal protein eL14 family.

The protein is Large ribosomal subunit protein eL14 of Saccharolobus islandicus (strain M.14.25 / Kamchatka #1) (Sulfolobus islandicus).